Here is a 247-residue protein sequence, read N- to C-terminus: 3-deoxy-manno-octulosonate cytidylyltransferase (247 aa).

This sequence belongs to the KdsB family.

It is found in the cytoplasm. It catalyses the reaction 3-deoxy-alpha-D-manno-oct-2-ulosonate + CTP = CMP-3-deoxy-beta-D-manno-octulosonate + diphosphate. Its pathway is nucleotide-sugar biosynthesis; CMP-3-deoxy-D-manno-octulosonate biosynthesis; CMP-3-deoxy-D-manno-octulosonate from 3-deoxy-D-manno-octulosonate and CTP: step 1/1. The protein operates within bacterial outer membrane biogenesis; lipopolysaccharide biosynthesis. Activates KDO (a required 8-carbon sugar) for incorporation into bacterial lipopolysaccharide in Gram-negative bacteria. The sequence is that of 3-deoxy-manno-octulosonate cytidylyltransferase from Bdellovibrio bacteriovorus (strain ATCC 15356 / DSM 50701 / NCIMB 9529 / HD100).